The following is a 203-amino-acid chain: Glycerol-3-phosphate acyltransferase (203 aa).

The next 5 helical transmembrane spans lie at 10 to 30 (LLLGLTALLAYLLGSVPFGIM), 60 to 80 (LAAFLTLVLDAGKGAIAVFLA), 88 to 108 (AAQLAGFAAFLGHCFPVFLGF), 118 to 138 (LGTLLALAWPIGLAACAIWAI), and 162 to 182 (FTLGLPSAVVFCAALATLIFL).

Belongs to the PlsY family. In terms of assembly, probably interacts with PlsX.

The protein localises to the cell inner membrane. The enzyme catalyses an acyl phosphate + sn-glycerol 3-phosphate = a 1-acyl-sn-glycero-3-phosphate + phosphate. It participates in lipid metabolism; phospholipid metabolism. Catalyzes the transfer of an acyl group from acyl-phosphate (acyl-PO(4)) to glycerol-3-phosphate (G3P) to form lysophosphatidic acid (LPA). This enzyme utilizes acyl-phosphate as fatty acyl donor, but not acyl-CoA or acyl-ACP. This chain is Glycerol-3-phosphate acyltransferase, found in Jannaschia sp. (strain CCS1).